The chain runs to 1209 residues: ATP-dependent helicase/nuclease subunit A (1209 aa).

Residues 9-482 enclose the UvrD-like helicase ATP-binding domain; that stretch reads SQWTDEQWQA…IDLAKNFRSR (474 aa). Position 30–37 (30–37) interacts with ATP; the sequence is AAAGSGKT. The UvrD-like helicase C-terminal domain occupies 510–798; that stretch reads AALRFGAQDY…RMMTIHKSKG (289 aa).

Belongs to the helicase family. AddA subfamily. As to quaternary structure, heterodimer of AddA and AddB/RexB. Mg(2+) is required as a cofactor.

The enzyme catalyses Couples ATP hydrolysis with the unwinding of duplex DNA by translocating in the 3'-5' direction.. It carries out the reaction ATP + H2O = ADP + phosphate + H(+). In terms of biological role, the heterodimer acts as both an ATP-dependent DNA helicase and an ATP-dependent, dual-direction single-stranded exonuclease. Recognizes the chi site generating a DNA molecule suitable for the initiation of homologous recombination. The AddA nuclease domain is required for chi fragment generation; this subunit has the helicase and 3' -&gt; 5' nuclease activities. The chain is ATP-dependent helicase/nuclease subunit A from Anoxybacillus flavithermus (strain DSM 21510 / WK1).